Reading from the N-terminus, the 400-residue chain is Elongation factor Tu (400 aa).

The 200-residue stretch at 10–209 folds into the tr-type G domain; it reads KEHVNIGTIG…QVDNWIDAPL (200 aa). Residues 19-26 are G1; it reads GHVDHGKT. 19–26 is a binding site for GTP; it reads GHVDHGKT. Position 26 (threonine 26) interacts with Mg(2+). Residues 61 to 65 form a G2 region; sequence GITIN. Positions 82–85 are G3; sequence DCPG. Residues 82-86 and 137-140 contribute to the GTP site; these read DCPGH and NKVD. The G4 stretch occupies residues 137-140; sequence NKVD. Positions 179-181 are G5; it reads SAL.

The protein belongs to the TRAFAC class translation factor GTPase superfamily. Classic translation factor GTPase family. EF-Tu/EF-1A subfamily. As to quaternary structure, monomer.

The protein localises to the cytoplasm. The catalysed reaction is GTP + H2O = GDP + phosphate + H(+). Functionally, GTP hydrolase that promotes the GTP-dependent binding of aminoacyl-tRNA to the A-site of ribosomes during protein biosynthesis. The sequence is that of Elongation factor Tu from Mycoplasma mobile (strain ATCC 43663 / 163K / NCTC 11711) (Mesomycoplasma mobile).